Here is an 878-residue protein sequence, read N- to C-terminus: Splicing factor 3B subunit 2 (878 aa).

The segment covering 1-10 (MAAEHPEPPK) has biased composition (basic and acidic residues). Disordered regions lie at residues 1–25 (MAAE…GHYG) and 67–136 (RPVL…LRVG). Lys-10 participates in a covalent cross-link: Glycyl lysine isopeptide (Lys-Gly) (interchain with G-Cter in SUMO2). In terms of domain architecture, SAP spans 24 to 58 (YGAWAAQELQARLAEIGAPIQGSREELVERLQTYT). Pro residues-rich tracts occupy residues 91–114 (PMPP…PPPG) and 122–133 (AHPPNLGPPPPL). Positions 140 to 177 (ALSEEERLKLAQQQAALLMQQEERAKQAAVLMEQERQQ) form a coiled coil. Disordered regions lie at residues 183–356 (GTAV…EYVT) and 383–436 (KKEK…SKKK). Low complexity predominate over residues 201-221 (PLGPRVAAPVGPVVPTPTVLP). Omega-N-methylarginine is present on residues Arg-205, Arg-228, and Arg-230. Residues 224 to 237 (APVPRPRGPPPPPG) show a composition bias toward pro residues. An N6-acetyllysine modification is found at Lys-258. Basic and acidic residues predominate over residues 260–269 (LQLKESRQEE). Residue Lys-263 forms a Glycyl lysine isopeptide (Lys-Gly) (interchain with G-Cter in SUMO2) linkage. Phosphoserine is present on Ser-272. A Phosphothreonine modification is found at Thr-281. Phosphoserine occurs at positions 290 and 292. Phosphothreonine is present on Thr-294. A Phosphoserine modification is found at Ser-300. Over residues 305–321 (EKNRKRRNRKKKKKPQR) the composition is skewed to basic residues. A compositionally biased stretch (basic and acidic residues) spans 330–342 (SGDREKDSGRSRG). Ser-343 carries the phosphoserine modification. Residues Lys-383 and Lys-395 each participate in a glycyl lysine isopeptide (Lys-Gly) (interchain with G-Cter in SUMO2) cross-link. Composition is skewed to basic and acidic residues over residues 383–397 (KKEK…DKME) and 405–414 (KGFEEEHKDS). Positions 384–533 (KEKEKEPEKL…QEKEEQKTMK (150 aa)) are required for interaction with PRMT9. 3 positions are modified to phosphoserine: Ser-414, Ser-418, and Ser-419. Residue Lys-475 forms a Glycyl lysine isopeptide (Lys-Gly) (interchain with G-Cter in SUMO2) linkage. 2 positions are modified to omega-N-methylarginine: Arg-491 and Arg-498. Arg-491 carries the post-translational modification Symmetric dimethylarginine. Lys-526 participates in a covalent cross-link: Glycyl lysine isopeptide (Lys-Gly) (interchain with G-Cter in SUMO2). The tract at residues 674 to 740 (AAEFQTKTEE…PGGFSSVPAG (67 aa)) is disordered. The span at 695 to 715 (EPSDEESSEEEEEEESDEDKP) shows a compositional bias: acidic residues. Lys-753 is covalently cross-linked (Glycyl lysine isopeptide (Lys-Gly) (interchain with G-Cter in SUMO2)). Thr-763 is subject to Phosphothreonine. Glycyl lysine isopeptide (Lys-Gly) (interchain with G-Cter in SUMO2) cross-links involve residues Lys-773, Lys-826, and Lys-840. The span at 827-852 (YEEHVREQQAQVEKEDFSDMVAEHAA) shows a compositional bias: basic and acidic residues. The segment at 827-878 (YEEHVREQQAQVEKEDFSDMVAEHAAKQKQKKRKAQPQDSRGGSKKYKEFKF) is disordered. Position 844 is a phosphoserine (Ser-844).

In terms of assembly, component of the 17S U2 SnRNP complex, a ribonucleoprotein complex that contains small nuclear RNA (snRNA) U2 and a number of specific proteins. Part of the SF3B subcomplex of the 17S U2 SnRNP complex. SF3B associates with the splicing subcomplex SF3A and a 12S RNA unit to form the U2 small nuclear ribonucleoproteins complex (U2 snRNP). Within the SF3B complex, interacts directly with SF3B4. Found in a complex with PRMT9, SF3B2 and SF3B4. Interacts (Arg-491-methylated form) with SMN1 (via Tudor domain). Interacts with RBM7. Interacts with ERCC6. Component of the minor spliceosome. Within this complex, interacts with SCNM1 and CRIPT. Post-translationally, methylation at Arg-491 by PRMT9 is required for the interaction with SMN1.

The protein resides in the nucleus. The protein localises to the nucleus speckle. Functionally, component of the 17S U2 SnRNP complex of the spliceosome, a large ribonucleoprotein complex that removes introns from transcribed pre-mRNAs. The 17S U2 SnRNP complex (1) directly participates in early spliceosome assembly and (2) mediates recognition of the intron branch site during pre-mRNA splicing by promoting the selection of the pre-mRNA branch-site adenosine, the nucleophile for the first step of splicing. Within the 17S U2 SnRNP complex, SF3B2 is part of the SF3B subcomplex, which is required for 'A' complex assembly formed by the stable binding of U2 snRNP to the branchpoint sequence in pre-mRNA. Sequence independent binding of SF3A and SF3B subcomplexes upstream of the branch site is essential, it may anchor U2 snRNP to the pre-mRNA. May also be involved in the assembly of the 'E' complex. Also acts as a component of the minor spliceosome, which is involved in the splicing of U12-type introns in pre-mRNAs. In Mus musculus (Mouse), this protein is Splicing factor 3B subunit 2.